Consider the following 65-residue polypeptide: Large ribosomal subunit protein bL35 (65 aa).

Belongs to the bacterial ribosomal protein bL35 family.

This Synechococcus sp. (strain CC9311) protein is Large ribosomal subunit protein bL35.